The primary structure comprises 319 residues: Putative peptide permease protein BRA0408/BS1330_II0405 (319 aa).

6 helical membrane-spanning segments follow: residues 9–29 (LLIG…LLQL), 102–122 (LLLM…TGII), 138–158 (LALL…LYVF), 182–202 (LLRH…ALIM), 242–262 (LPVV…AIFI), and 284–304 (YPVI…VNIL). The region spanning 98-305 (IGPTLLLMAA…ACVIIVNILT (208 aa)) is the ABC transmembrane type-1 domain.

Belongs to the binding-protein-dependent transport system permease family. The complex is composed of two ATP-binding proteins (BRA0404 and BRA0405), two transmembrane proteins (BRA0407 and BRA0408) and a solute-binding protein (BRA0409).

Its subcellular location is the cell inner membrane. In terms of biological role, probably part of an ABC transporter complex that could be involved in peptide import. Probably responsible for the translocation of the substrate across the membrane. The sequence is that of Putative peptide permease protein BRA0408/BS1330_II0405 from Brucella suis biovar 1 (strain 1330).